An 89-amino-acid polypeptide reads, in one-letter code: Small ribosomal subunit protein uS15 (89 aa).

The protein belongs to the universal ribosomal protein uS15 family. In terms of assembly, part of the 30S ribosomal subunit. Forms a bridge to the 50S subunit in the 70S ribosome, contacting the 23S rRNA.

Functionally, one of the primary rRNA binding proteins, it binds directly to 16S rRNA where it helps nucleate assembly of the platform of the 30S subunit by binding and bridging several RNA helices of the 16S rRNA. Its function is as follows. Forms an intersubunit bridge (bridge B4) with the 23S rRNA of the 50S subunit in the ribosome. This chain is Small ribosomal subunit protein uS15, found in Leuconostoc citreum (strain KM20).